The following is a 68-amino-acid chain: Putative membrane protein insertion efficiency factor (68 aa).

Belongs to the UPF0161 family.

It localises to the cell inner membrane. Could be involved in insertion of integral membrane proteins into the membrane. This Aquifex aeolicus (strain VF5) protein is Putative membrane protein insertion efficiency factor.